Reading from the N-terminus, the 375-residue chain is DNA replication and repair protein RecF (375 aa).

30–37 (GENAQGKT) is an ATP binding site.

It belongs to the RecF family.

Its subcellular location is the cytoplasm. The RecF protein is involved in DNA metabolism; it is required for DNA replication and normal SOS inducibility. RecF binds preferentially to single-stranded, linear DNA. It also seems to bind ATP. The protein is DNA replication and repair protein RecF of Bacillus cereus (strain G9842).